The chain runs to 307 residues: MTRHARNCTAGAVYTYNEKKRDAAESGYGTNAQRLGKDSVKSFDCCSLTLQPCRRPVITKDGYLFDKEAILQYIVTKKNEYSRRLKEYERLRRAEEDKLSQEANSKQQARMERFVNAEKPAMTPAHSSAAASEKPSTSSAAAAASSESSSASSISNMTNGHEKKLPSFWLPSECPNAGLAKAQKPDATIYCPVSQKPLRVKDLIDVKFTLLKDGDTKRSLIAKEARYMCPITHDVLSNAVPCAVLRPTGDVVTMECVERLIRKDMIHPLTDRKLKEKDIIPLQRGGTGYATTNDHLQAKEKRPMLQA.

Residues 120–159 (PAMTPAHSSAAASEKPSTSSAAAAASSESSSASSISNMTN) are disordered. The segment covering 127-155 (SSAAASEKPSTSSAAAAASSESSSASSIS) has biased composition (low complexity).

The protein belongs to the NOSIP family.

It localises to the cytoplasm. Its subcellular location is the nucleus. Its function is as follows. Negatively regulates nitric oxide production by inducing nitric oxide synthase translocation to actin cytoskeleton and inhibiting its enzymatic activity. This is Nitric oxide synthase-interacting protein homolog from Drosophila melanogaster (Fruit fly).